A 378-amino-acid chain; its full sequence is Phospho-N-acetylmuramoyl-pentapeptide-transferase (378 aa).

The next 11 helical transmembrane spans lie at 26 to 46 (LFRL…TGAN), 57 to 77 (LPWL…VPLL), 103 to 123 (MGGI…TGFA), 127 to 147 (LSPT…IGWW), 171 to 191 (GIGA…ATVV), 195 to 215 (WGWV…VPMA), 225 to 245 (GLDG…GIIL), 247 to 267 (PYPD…GFLW), 275 to 295 (VFMG…IGLA), 302 to 322 (LLIV…QVLY), and 356 to 376 (IVRT…LLQW).

It belongs to the glycosyltransferase 4 family. MraY subfamily. It depends on Mg(2+) as a cofactor.

The protein localises to the cell inner membrane. It catalyses the reaction UDP-N-acetyl-alpha-D-muramoyl-L-alanyl-gamma-D-glutamyl-meso-2,6-diaminopimeloyl-D-alanyl-D-alanine + di-trans,octa-cis-undecaprenyl phosphate = di-trans,octa-cis-undecaprenyl diphospho-N-acetyl-alpha-D-muramoyl-L-alanyl-D-glutamyl-meso-2,6-diaminopimeloyl-D-alanyl-D-alanine + UMP. It participates in cell wall biogenesis; peptidoglycan biosynthesis. Functionally, catalyzes the initial step of the lipid cycle reactions in the biosynthesis of the cell wall peptidoglycan: transfers peptidoglycan precursor phospho-MurNAc-pentapeptide from UDP-MurNAc-pentapeptide onto the lipid carrier undecaprenyl phosphate, yielding undecaprenyl-pyrophosphoryl-MurNAc-pentapeptide, known as lipid I. The polypeptide is Phospho-N-acetylmuramoyl-pentapeptide-transferase (Thermosynechococcus vestitus (strain NIES-2133 / IAM M-273 / BP-1)).